The primary structure comprises 1203 residues: Metabotropic glutamate receptor 5 (1203 aa).

The first 18 residues, 1-18, serve as a signal peptide directing secretion; sequence MVLLLILSVLLLKEDVRG. Residues 19–579 are Extracellular-facing; it reads SAQSSERRVV…QYLRWGDPEP (561 aa). The cysteines at positions 57 and 99 are disulfide-linked. Tyr-64 lines the L-glutamate pocket. The N-linked (GlcNAc...) asparagine glycan is linked to Asn-88. L-glutamate-binding positions include Ser-151 and 172-174; that span reads SAT. Asn-209 carries N-linked (GlcNAc...) asparagine glycosylation. Tyr-222 is an L-glutamate binding site. Intrachain disulfides connect Cys-240/Cys-529, Cys-275/Cys-277, Cys-364/Cys-380, Cys-418/Cys-425, Cys-510/Cys-530, Cys-514/Cys-533, Cys-536/Cys-548, and Cys-551/Cys-564. L-glutamate is bound at residue Asp-304. N-linked (GlcNAc...) asparagine glycosylation is found at Asn-377 and Asn-381. Lys-395 lines the L-glutamate pocket. Asn-444 carries N-linked (GlcNAc...) asparagine glycosylation. Residues 580–602 form a helical membrane-spanning segment; it reads IAAVVFACLGLLATLFVTVIFII. Over 603-612 the chain is Cytoplasmic; sequence YRDTPVVKSS. The helical transmembrane segment at 613 to 635 threads the bilayer; the sequence is SRELCYIILAGICLGYLCTFCLI. Over 636–643 the chain is Extracellular; the sequence is AKPKQIYC. Cys-643 and Cys-732 are joined by a disulfide. Residues 644–666 form a helical membrane-spanning segment; the sequence is YLQRIGIGLSPAMSYSALVTKTN. Residues 667–692 are Cytoplasmic-facing; that stretch reads RIARILAGSKKKICTKKPRFMSACAQ. Residues 693 to 713 form a helical membrane-spanning segment; that stretch reads LVIAFILICIQLGIIVALFIM. Residues 714–736 are Extracellular-facing; it reads EPPDIMHDYPSIREVYLICNTTN. N-linked (GlcNAc...) asparagine glycosylation is present at Asn-733. Residues 737-758 form a helical membrane-spanning segment; sequence LGVVTPLGYNGLLILSCTFYAF. Topologically, residues 759 to 771 are cytoplasmic; that stretch reads KTRNVPANFNEAK. The chain crosses the membrane as a helical span at residues 772-794; sequence YIAFTMYTTCIIWLAFVPIYFGS. At 795–797 the chain is on the extracellular side; the sequence is NYK. The helical transmembrane segment at 798-819 threads the bilayer; that stretch reads IITMCFSVSLSATVALGCMFVP. Residues 820–1203 lie on the Cytoplasmic side of the membrane; the sequence is KVYIILAKPE…RDYTQSSSSL (384 aa). A Phosphoserine modification is found at Ser-860. Arg-868 bears the Omega-N-methylarginine mark. 2 disordered regions span residues 892 to 1054 and 1120 to 1182; these read FTPK…GSLM and TGGA…ALCI. Positions 905–920 are enriched in polar residues; that stretch reads TMSSSNGKSVTWAQNE. At Arg-924 the chain carries Omega-N-methylarginine. The segment covering 960 to 977 has biased composition (gly residues); the sequence is QGAGAGGGSGPGAAGAGS. Low complexity predominate over residues 1007-1019; that stretch reads PAAARPRSPSPIS. Residues Ser-1014 and Ser-1016 each carry the phosphoserine modification. Composition is skewed to polar residues over residues 1039 to 1054 and 1165 to 1176; these read HSETAARSSSSQGSLM and DSGSTTPNSPVS.

Belongs to the G-protein coupled receptor 3 family. As to quaternary structure, the PPXXF motif binds HOMER1, HOMER2 and HOMER3. Interacts with RYR1, RYR2, ITPR1, SHANK1 and SHANK3. Interacts with SIAH1 and TAMALIN. Interacts with NCDN. Interacts with NECAB2. Interacts with CAMK2A.

Its subcellular location is the cell membrane. Its function is as follows. G-protein coupled receptor for glutamate. Ligand binding causes a conformation change that triggers signaling via guanine nucleotide-binding proteins (G proteins) and modulates the activity of down-stream effectors. Signaling activates a phosphatidylinositol-calcium second messenger system and generates a calcium-activated chloride current. Plays an important role in the regulation of synaptic plasticity and the modulation of the neural network activity. The chain is Metabotropic glutamate receptor 5 (Grm5) from Mus musculus (Mouse).